A 158-amino-acid chain; its full sequence is MIRIGHGFDVHRFGGEGPIIIGGVKIPYEQGLIAHSDGDVALHALSDALLGAIAAGDIGRHFPDTDDKWKGADSRELLKDVYRRVKAQGYVLGNADVTIIAQAPKMAPYIQAMCAAIAEDLETDLGNINVKATTTEKLGFTGRKEGIACEAVVLLRKA.

A divalent metal cation is bound by residues Asp-9 and His-11. 4-CDP-2-C-methyl-D-erythritol 2-phosphate-binding positions include 9–11 (DVH) and 35–36 (HS). His-43 provides a ligand contact to a divalent metal cation. 4-CDP-2-C-methyl-D-erythritol 2-phosphate is bound by residues 57–59 (DIG), 62–66 (FPDTD), 101–107 (AQAPKMA), 133–136 (TTTE), Phe-140, and Arg-143.

It belongs to the IspF family. In terms of assembly, homotrimer. Requires a divalent metal cation as cofactor.

The enzyme catalyses 4-CDP-2-C-methyl-D-erythritol 2-phosphate = 2-C-methyl-D-erythritol 2,4-cyclic diphosphate + CMP. It participates in isoprenoid biosynthesis; isopentenyl diphosphate biosynthesis via DXP pathway; isopentenyl diphosphate from 1-deoxy-D-xylulose 5-phosphate: step 4/6. Functionally, involved in the biosynthesis of isopentenyl diphosphate (IPP) and dimethylallyl diphosphate (DMAPP), two major building blocks of isoprenoid compounds. Catalyzes the conversion of 4-diphosphocytidyl-2-C-methyl-D-erythritol 2-phosphate (CDP-ME2P) to 2-C-methyl-D-erythritol 2,4-cyclodiphosphate (ME-CPP) with a corresponding release of cytidine 5-monophosphate (CMP). This is 2-C-methyl-D-erythritol 2,4-cyclodiphosphate synthase from Vibrio cholerae serotype O1 (strain ATCC 39541 / Classical Ogawa 395 / O395).